Here is a 358-residue protein sequence, read N- to C-terminus: MFDSVTGLIAEHDDLQQQLSDPELHSDPVRSKKVNRRYAELSRIVAAYTEWKQLTDDLEAARELAAEDDAFAAEIPGLEQGLEESEEKLRRLLIPRDPNDSRDAIMEIKMGEGGAESALFAGDLLSMYLHYADSRRWKAEIIEQTSSDLGGIKDVQVAFKGSSSDPAEGVWAHLKYEGGVHRVQRVPATESQGRIHTSAAGVLVFPEVDEPEEVEINPNDLKIDVFRSSGPGGQSVNTTDSAVRITHAPTGIVVSMQNEKSQLQNREAAMRVLRARLLAKQQEEADAEAAEFRKGQIRTMERSERIRTYNFPENRIADHRTGYKAYNLDAVMNGALGPVIESCILADEETRLANLSTD.

Glutamine 234 is subject to N5-methylglutamine.

This sequence belongs to the prokaryotic/mitochondrial release factor family. In terms of processing, methylated by PrmC. Methylation increases the termination efficiency of RF1.

Its subcellular location is the cytoplasm. In terms of biological role, peptide chain release factor 1 directs the termination of translation in response to the peptide chain termination codons UAG and UAA. The polypeptide is Peptide chain release factor 1 (Leifsonia xyli subsp. xyli (strain CTCB07)).